Reading from the N-terminus, the 335-residue chain is Glutamyl-tRNA reductase (335 aa).

Residues T60–R63, S110, E115–E117, and Q121 contribute to the substrate site. C61 serves as the catalytic Nucleophile. Residue G189–N194 coordinates NADP(+).

The protein belongs to the glutamyl-tRNA reductase family. In terms of assembly, homodimer.

The enzyme catalyses (S)-4-amino-5-oxopentanoate + tRNA(Glu) + NADP(+) = L-glutamyl-tRNA(Glu) + NADPH + H(+). It participates in porphyrin-containing compound metabolism; protoporphyrin-IX biosynthesis; 5-aminolevulinate from L-glutamyl-tRNA(Glu): step 1/2. Functionally, catalyzes the NADPH-dependent reduction of glutamyl-tRNA(Glu) to glutamate 1-semialdehyde (GSA). This Chlamydia trachomatis serovar D (strain ATCC VR-885 / DSM 19411 / UW-3/Cx) protein is Glutamyl-tRNA reductase.